Here is a 490-residue protein sequence, read N- to C-terminus: Cobyric acid synthase (490 aa).

The 188-residue stretch at 252–439 (RLKVVVPVLP…LHGLFESTAA (188 aa)) folds into the GATase cobBQ-type domain. Cysteine 333 functions as the Nucleophile in the catalytic mechanism. The active site involves histidine 431.

Belongs to the CobB/CobQ family. CobQ subfamily.

It participates in cofactor biosynthesis; adenosylcobalamin biosynthesis. Functionally, catalyzes amidations at positions B, D, E, and G on adenosylcobyrinic A,C-diamide. NH(2) groups are provided by glutamine, and one molecule of ATP is hydrogenolyzed for each amidation. The polypeptide is Cobyric acid synthase (Pseudomonas aeruginosa (strain ATCC 15692 / DSM 22644 / CIP 104116 / JCM 14847 / LMG 12228 / 1C / PRS 101 / PAO1)).